The chain runs to 2194 residues: Genome polyprotein (2194 aa).

Residue G2 is the site of N-myristoyl glycine; by host attachment. Topologically, residues 2-1504 (GAQVSTQKTG…HVSRAFICLQ (1503 aa)) are cytoplasmic. The amphipathic alpha-helix stretch occupies residues 566-582 (LYQNDPEGALNKAVGRV). Catalysis depends on for protease 2A activity residues H881 and D899. Residues C916 and C918 each coordinate Zn(2+). The active-site For protease 2A activity is C970. Zn(2+) is bound by residues C976 and H978. The interval 1110 to 1182 (NNNWLKKFTE…EQSAPSQSDQ (73 aa)) is membrane-binding. The interval 1110-1248 (NNNWLKKFTE…SPGAGKSVAT (139 aa)) is oligomerization. Residues 1131–1135 (AIKIQ) form an RNA-binding region. Residues 1214 to 1370 (EKKMSNYIQF…SMYSQNGKIN (157 aa)) enclose the SF3 helicase domain. 3 residues coordinate Zn(2+): C1378, C1390, and C1395. A C4-type; degenerate zinc finger spans residues 1378–1395 (CDEECCPVNFKRCCPLVC). Residues 1422 to 1429 (EYNHRHSV) are RNA-binding. Residues 1433–1438 (LEALFQ) are oligomerization. Residues 1505–1520 (ALTTFVSVAGIIYIIY) lie within the membrane without spanning it. Residues 1521 to 2194 (KLFAGFQGAY…TLRRKWLDSF (674 aa)) are Cytoplasmic-facing. Y1530 is subject to O-(5'-phospho-RNA)-tyrosine. One can recognise a Peptidase C3 domain in the interval 1550 to 1728 (GPAFEFAVAM…FSAALLRHYF (179 aa)). Residues H1589, E1620, and C1696 each act as for protease 3C activity in the active site. The RdRp catalytic domain maps to 1959–2075 (GHLIAFDYSG…SYPHPIDASL (117 aa)). Mg(2+)-binding residues include D1965 and D2061.

It belongs to the picornaviruses polyprotein family. Interacts with capsid protein VP1 and capsid protein VP3 to form heterotrimeric protomers. In terms of assembly, interacts with capsid protein VP0, and capsid protein VP3 to form heterotrimeric protomers. Five protomers subsequently associate to form pentamers which serve as building blocks for the capsid. Interacts with capsid protein VP2, capsid protein VP3 and capsid protein VP4 following cleavage of capsid protein VP0. As to quaternary structure, interacts with capsid protein VP1 and capsid protein VP3 in the mature capsid. Interacts with capsid protein VP0 and capsid protein VP1 to form heterotrimeric protomers. Five protomers subsequently associate to form pentamers which serve as building blocks for the capsid. Interacts with capsid protein VP4 in the mature capsid. Interacts with protein 2C; this interaction may be important for virion morphogenesis. In terms of assembly, interacts with capsid protein VP1 and capsid protein VP3. As to quaternary structure, homodimer. Homohexamer; forms a hexameric ring structure with 6-fold symmetry characteristic of AAA+ ATPases. Interacts (via N-terminus) with host RTN3 (via reticulon domain); this interaction is important for viral replication. Interacts with capsid protein VP3; this interaction may be important for virion morphogenesis. In terms of assembly, interacts with protein 3CD. As to quaternary structure, homodimer. Interacts with host GBF1. Interacts (via GOLD domain) with host ACBD3 (via GOLD domain); this interaction allows the formation of a viral protein 3A/ACBD3 heterotetramer with a 2:2 stoichiometry, which will stimulate the recruitment of host PI4KB in order to synthesize PI4P at the viral RNA replication sites. Interacts with RNA-directed RNA polymerase. In terms of assembly, interacts with protein 3AB and with RNA-directed RNA polymerase. As to quaternary structure, interacts with Viral protein genome-linked and with protein 3CD. Mg(2+) serves as cofactor. Specific enzymatic cleavages in vivo by the viral proteases yield processing intermediates and the mature proteins. In terms of processing, myristoylation is required for the formation of pentamers during virus assembly. Further assembly of 12 pentamers and a molecule of genomic RNA generates the provirion. Post-translationally, during virion maturation, immature virions are rendered infectious following cleavage of VP0 into VP4 and VP2. This maturation seems to be an autocatalytic event triggered by the presence of RNA in the capsid and it is followed by a conformational change infectious virion. Myristoylation is required during RNA encapsidation and formation of the mature virus particle. In terms of processing, VPg is uridylylated by the polymerase into VPg-pUpU. This acts as a nucleotide-peptide primer for the genomic RNA replication.

Its subcellular location is the virion. The protein localises to the host cytoplasm. It is found in the host cytoplasmic vesicle membrane. The protein resides in the host nucleus. It catalyses the reaction a ribonucleoside 5'-triphosphate + H2O = a ribonucleoside 5'-diphosphate + phosphate + H(+). The enzyme catalyses Selective cleavage of Tyr-|-Gly bond in the picornavirus polyprotein.. The catalysed reaction is RNA(n) + a ribonucleoside 5'-triphosphate = RNA(n+1) + diphosphate. It carries out the reaction Selective cleavage of Gln-|-Gly bond in the poliovirus polyprotein. In other picornavirus reactions Glu may be substituted for Gln, and Ser or Thr for Gly.. Replication or transcription is subject to high level of random mutations by the nucleotide analog ribavirin. In terms of biological role, forms an icosahedral capsid of pseudo T=3 symmetry with capsid proteins VP2 and VP3. The capsid is 300 Angstroms in diameter, composed of 60 copies of each capsid protein and enclosing the viral positive strand RNA genome. Capsid protein VP1 mainly forms the vertices of the capsid. Capsid protein VP1 interacts with host cell receptor to provide virion attachment to target host cells. This attachment induces virion internalization. Tyrosine kinases are probably involved in the entry process. After binding to its receptor, the capsid undergoes conformational changes. Capsid protein VP1 N-terminus (that contains an amphipathic alpha-helix) and capsid protein VP4 are externalized. Together, they shape a pore in the host membrane through which viral genome is translocated to host cell cytoplasm. Forms an icosahedral capsid of pseudo T=3 symmetry with capsid proteins VP2 and VP3. The capsid is 300 Angstroms in diameter, composed of 60 copies of each capsid protein and enclosing the viral positive strand RNA genome. Functionally, lies on the inner surface of the capsid shell. After binding to the host receptor, the capsid undergoes conformational changes. Capsid protein VP4 is released, Capsid protein VP1 N-terminus is externalized, and together, they shape a pore in the host membrane through which the viral genome is translocated into the host cell cytoplasm. Its function is as follows. Component of immature procapsids, which is cleaved into capsid proteins VP4 and VP2 after maturation. Allows the capsid to remain inactive before the maturation step. In terms of biological role, cysteine protease that cleaves viral polyprotein and specific host proteins. It is responsible for the autocatalytic cleavage between the P1 and P2 regions, which is the first cleavage occurring in the polyprotein. Also cleaves the host translation initiation factor EIF4G1, in order to shut down the capped cellular mRNA translation. Inhibits the host nucleus-cytoplasm protein and RNA trafficking by cleaving host members of the nuclear pores. Counteracts stress granule formation probably by antagonizing its assembly or promoting its dissassembly. Plays an essential role in the virus replication cycle by acting as a viroporin. Creates a pore in the host endoplasmic reticulum and as a consequence releases Ca2+ in the cytoplasm of infected cell. In turn, high levels of cytoplasmic calcium may trigger membrane trafficking and transport of viral ER-associated proteins to viroplasms, sites of viral genome replication. Functionally, induces and associates with structural rearrangements of intracellular membranes. Displays RNA-binding, nucleotide binding and NTPase activities. May play a role in virion morphogenesis and viral RNA encapsidation by interacting with the capsid protein VP3. Its function is as follows. Localizes the viral replication complex to the surface of membranous vesicles. Together with protein 3CD binds the Cis-Active RNA Element (CRE) which is involved in RNA synthesis initiation. Acts as a cofactor to stimulate the activity of 3D polymerase, maybe through a nucleid acid chaperone activity. In terms of biological role, localizes the viral replication complex to the surface of membranous vesicles. It inhibits host cell endoplasmic reticulum-to-Golgi apparatus transport and causes the disassembly of the Golgi complex, possibly through GBF1 interaction. This would result in depletion of MHC, trail receptors and IFN receptors at the host cell surface. Plays an essential role in viral RNA replication by recruiting ACBD3 and PI4KB at the viral replication sites, thereby allowing the formation of the rearranged membranous structures where viral replication takes place. Acts as a primer for viral RNA replication and remains covalently bound to viral genomic RNA. VPg is uridylylated prior to priming replication into VPg-pUpU. The oriI viral genomic sequence may act as a template for this. The VPg-pUpU is then used as primer on the genomic RNA poly(A) by the RNA-dependent RNA polymerase to replicate the viral genome. During genome replication, the VPg-RNA linkage is removed by the host TDP2, thereby accelerating replication. During the late stage of the replication cycle, host TDP2 is excluded from sites of viral RNA synthesis and encapsidation, allowing for the generation of progeny virions. Functionally, involved in the viral replication complex and viral polypeptide maturation. It exhibits protease activity with a specificity and catalytic efficiency that is different from protease 3C. Protein 3CD lacks polymerase activity. Protein 3CD binds to the 5'UTR of the viral genome. Its function is as follows. Replicates the viral genomic RNA on the surface of intracellular membranes. May form linear arrays of subunits that propagate along a strong head-to-tail interaction called interface-I. Covalently attaches UMP to a tyrosine of VPg, which is used to prime RNA synthesis. The positive stranded RNA genome is first replicated at virus induced membranous vesicles, creating a dsRNA genomic replication form. This dsRNA is then used as template to synthesize positive stranded RNA genomes. ss(+)RNA genomes are either translated, replicated or encapsidated. In terms of biological role, major viral protease that mediates proteolytic processing of the polyprotein. Cleaves host EIF5B, contributing to host translation shutoff. Also cleaves host PABPC1, contributing to host translation shutoff. Cleaves host NLRP1, triggers host N-glycine-mediated degradation of the autoinhibitory NLRP1 N-terminal fragment. This is Genome polyprotein from Homo sapiens (Human).